The primary structure comprises 494 residues: Cytochrome P450 monooxygenase acrF (494 aa).

Cys-420 is a heme binding site.

It belongs to the cytochrome P450 family. Heme is required as a cofactor.

It functions in the pathway secondary metabolite biosynthesis. Functionally, cytochrome P450 monooxygenase; part of the cluster that mediates the biosynthesis of acurin A, a highly reduced polyketide coupled to a serine via a peptide bond. The activities of the highly reducing polyketide synthase acrA and the nonribosomal peptide synthetase acrB are collectively responsible for the synthesis of the acurin A core structure with a heptaketide backbone produced by acrA covalently fused to a L-serine by acrB. After the formation of the PK-NRP hybrid product, it is detached from acrB by reductive release to set up the formation of the lactam ring by aldol condensation. The hydrolyase acrC then catalyzes water loss to generate a double bond in the ring. This double bond is probably reduced, which is followed by three oxidations at C-22 to generate the carboxylic acid moiety, involving probably the FAD-binding monooxygenase acrE and the cytochrome P450 monooxygenases acrD and acrF. Finally, a last methylation step performed by the O-methyltransferase acrG leads to the production of acurin A. The chain is Cytochrome P450 monooxygenase acrF from Aspergillus aculeatus (strain ATCC 16872 / CBS 172.66 / WB 5094).